The following is a 443-amino-acid chain: Cyclic AMP receptor 4 (443 aa).

Over 1 to 11 the chain is Extracellular; that stretch reads MKVLQEINLTY. N-linked (GlcNAc...) asparagine glycosylation is present at Asn8. A helical membrane pass occupies residues 12-32; that stretch reads SILVIADFSSIFGCLLVLIAF. The Cytoplasmic segment spans residues 33-44; sequence KKLKLLRNHITR. Residues 45 to 65 form a helical membrane-spanning segment; sequence VIACFCVSSLLKDIISTGLTL. Residues 66-89 are Extracellular-facing; that stretch reads SLGPQNEAGSTSFQCYLYAITITY. The chain crosses the membrane as a helical span at residues 90-110; it reads GSLACWLWTLCLAFSIYNLIV. The Cytoplasmic segment spans residues 111–119; the sequence is KREPEPEKY. The chain crosses the membrane as a helical span at residues 120-140; the sequence is EKFYHGVCWTIPLICVIVMLA. Residues 141–161 lie on the Extracellular side of the membrane; the sequence is KKTIEPVGNWCWISEKYVGYR. Residues 162–182 form a helical membrane-spanning segment; sequence FGLFYGPFFAIWIISAVLVGL. Residues 183–208 are Cytoplasmic-facing; that stretch reads TSRYTYSVIRNSVSDNKDKHMTYQFK. The chain crosses the membrane as a helical span at residues 209–229; that stretch reads LINYIIVFLLCWVFAIVNRIL. Over 230–263 the chain is Extracellular; the sequence is NGLGYYPTLPNILHTYFSVSHGFFASVTFIYNNP. Residues 264-284 form a helical membrane-spanning segment; the sequence is LMWRYWGSKIFLIFAKFGYFV. At 285–443 the chain is on the cytoplasmic side; that stretch reads ELQRRLDRNK…DEREKKDNKF (159 aa). Disordered regions lie at residues 325 to 354 and 396 to 443; these read NDISNDNQQQQQQQQTPQQPQQQFQQQQSP and SFEI…DNKF. Low complexity predominate over residues 332 to 352; that stretch reads QQQQQQQQTPQQPQQQFQQQQ. Residues 396-410 show a composition bias toward polar residues; sequence SFEITQPSNDLNTIE. The segment covering 411–425 has biased composition (low complexity); that stretch reads NNNNYNNNNNNNNNN. Over residues 429 to 443 the composition is skewed to basic and acidic residues; it reads IEKEKDEREKKDNKF.

It belongs to the G-protein coupled receptor 5 family. Post-translationally, C-terminal Ser or Thr residues may be phosphorylated.

Its subcellular location is the membrane. Receptor for cAMP. Regulates axial patterning and cellular differentiation during late development. The activity of this receptor is mediated by G proteins. The protein is Cyclic AMP receptor 4 (carD) of Dictyostelium discoideum (Social amoeba).